The primary structure comprises 229 residues: MKFSVLTLFPQLVLPYFEDSILKRALEKNLFELEVLNLRDFSANKHQKADHTLIGGGAGQILDPEMVENALHSVKNPKHTIFLSAVGKPFKQTDAMRLAQKKHVVLVCGRYEGFDERSIELGADEVFCIGDFILTGGELGALCLIDSIARHIQGVLGNAQSLENESFENHYLEAPNFANAVFKSKEINKIPAPLEYSKGNHARIKRLKLDLSKLRTKFYRLDLFKQHKS.

Residues G109 and 129 to 134 each bind S-adenosyl-L-methionine; that span reads IGDFIL.

This sequence belongs to the RNA methyltransferase TrmD family. In terms of assembly, homodimer.

It is found in the cytoplasm. The catalysed reaction is guanosine(37) in tRNA + S-adenosyl-L-methionine = N(1)-methylguanosine(37) in tRNA + S-adenosyl-L-homocysteine + H(+). Specifically methylates guanosine-37 in various tRNAs. The protein is tRNA (guanine-N(1)-)-methyltransferase of Helicobacter pylori (strain Shi470).